Here is a 142-residue protein sequence, read N- to C-terminus: Holo-[acyl-carrier-protein] synthase (142 aa).

Residues Asp-9 and Glu-63 each coordinate Mg(2+).

Belongs to the P-Pant transferase superfamily. AcpS family. Requires Mg(2+) as cofactor.

Its subcellular location is the cytoplasm. It carries out the reaction apo-[ACP] + CoA = holo-[ACP] + adenosine 3',5'-bisphosphate + H(+). Functionally, transfers the 4'-phosphopantetheine moiety from coenzyme A to a Ser of acyl-carrier-protein. The sequence is that of Holo-[acyl-carrier-protein] synthase from Burkholderia lata (strain ATCC 17760 / DSM 23089 / LMG 22485 / NCIMB 9086 / R18194 / 383).